We begin with the raw amino-acid sequence, 1614 residues long: Adenylate cyclase type 10 (1614 aa).

2 consecutive Guanylate cyclase domains span residues 42–179 (VLMF…RLAQ) and 293–418 (TIVF…ARMM). Asp-47 and Ile-48 together coordinate Mg(2+). 47–52 (DISGFT) provides a ligand contact to ATP. Position 95 (Lys-95) interacts with hydrogencarbonate. Asp-99 is a Mg(2+) binding site. Residues Asp-99 and Lys-144 each coordinate ATP. Residues Val-167, Arg-176, and Met-337 each contribute to the hydrogencarbonate site. ATP-binding positions include Val-406 and 412 to 416 (NIAAR).

The protein belongs to the adenylyl cyclase class-4/guanylyl cyclase family. Mg(2+) serves as cofactor. It depends on Mn(2+) as a cofactor. Expressed in testis.

The protein resides in the cell membrane. Its subcellular location is the cytoplasm. It is found in the cytoskeleton. It localises to the perinuclear region. The protein localises to the nucleus. The protein resides in the cell projection. Its subcellular location is the cilium. It is found in the mitochondrion. It catalyses the reaction ATP = 3',5'-cyclic AMP + diphosphate. Activated by manganese or magnesium ions. In the presence of magnesium ions, the enzyme is activated by bicarbonate. Calcium mildly increases the enzyme activity, also in the presence of magnesium ions. Functionally, catalyzes the formation of the signaling molecule cAMP. May function as sensor that mediates responses to changes in cellular bicarbonate and CO(2) levels. Has a critical role in mammalian spermatogenesis by producing the cAMP which regulates cAMP-responsive nuclear factors indispensable for sperm maturation in the epididymis. Induces capacitation, the maturational process that sperm undergo prior to fertilization. Involved in ciliary beat regulation. The protein is Adenylate cyclase type 10 (Adcy10) of Mus musculus (Mouse).